Here is a 337-residue protein sequence, read N- to C-terminus: UDP-3-O-acylglucosamine N-acyltransferase (337 aa).

Catalysis depends on His-238, which acts as the Proton acceptor.

The protein belongs to the transferase hexapeptide repeat family. LpxD subfamily. In terms of assembly, homotrimer.

The enzyme catalyses a UDP-3-O-[(3R)-3-hydroxyacyl]-alpha-D-glucosamine + a (3R)-hydroxyacyl-[ACP] = a UDP-2-N,3-O-bis[(3R)-3-hydroxyacyl]-alpha-D-glucosamine + holo-[ACP] + H(+). It functions in the pathway bacterial outer membrane biogenesis; LPS lipid A biosynthesis. In terms of biological role, catalyzes the N-acylation of UDP-3-O-acylglucosamine using 3-hydroxyacyl-ACP as the acyl donor. Is involved in the biosynthesis of lipid A, a phosphorylated glycolipid that anchors the lipopolysaccharide to the outer membrane of the cell. The protein is UDP-3-O-acylglucosamine N-acyltransferase of Xanthomonas oryzae pv. oryzae (strain MAFF 311018).